The chain runs to 36 residues: Dolichyl-diphosphooligosaccharide--protein glycosyltransferase subunit 2 (36 aa).

Belongs to the SWP1 family. Component of the oligosaccharyltransferase (OST) complex.

It localises to the endoplasmic reticulum. Its subcellular location is the endoplasmic reticulum membrane. Its pathway is protein modification; protein glycosylation. Its function is as follows. Subunit of the oligosaccharyl transferase (OST) complex that catalyzes the initial transfer of a defined glycan (Glc(3)Man(9)GlcNAc(2) in eukaryotes) from the lipid carrier dolichol-pyrophosphate to an asparagine residue within an Asn-X-Ser/Thr consensus motif in nascent polypeptide chains, the first step in protein N-glycosylation. N-glycosylation occurs cotranslationally and the complex associates with the Sec61 complex at the channel-forming translocon complex that mediates protein translocation across the endoplasmic reticulum (ER). All subunits are required for a maximal enzyme activity. The protein is Dolichyl-diphosphooligosaccharide--protein glycosyltransferase subunit 2 of Gallus gallus (Chicken).